The sequence spans 927 residues: MEDPVQLKEEGNKYFQSNDYGNAIECYSKALKLITDKKMKAVLYRNRSACYLKQENYIQAAADASKAIDVDASDIKALFRRCQALEKLGKLDQAYKDVQRCATLEPKNRTFLEMLHRLGSNIQEKLHVQFSTDSRVQKMFEILLDENSDKEKREKAANNLIVLGREDAGAERIFQNNGVNLLMQLIETKDPELILSAVRTLSGMCTGHRARATAIVHLVGINKICSIMAVDHEEIALAACNLLQNIVDSLTGEDKKVHGKEEALVLDTKKDLKVITTHLLDMLVSKKVSGHGRDQALNLLNKNIPRYDLKNKDNSKTLFVVDVGLKKILKVLGQVPELPNCLPLTPNTRLNASVLINKLYDDLRCDPERDDFRKICEEYITGSFDPKDMEKNLHAIQTVSGILQGPFDLGNILLGMQGVMEMMVALTGSEKEVDQLVAVEALIHASTKLSRASFIITNGVSLLKDIYKKTKNEKIKIRALVGLCKLGSAGGTDYALRQFAEGSTDKLAKQCRKWLCNTSLDIQTRKWAVEGLAYLTLDADVKDEFVEDEQSLKAMFELCKTSDKTILYSVATTLVNCTNSYDVKEVIPEMVQLAKFSKQHVPEQHPKDKKDFVLKRVKKLLQADVISALSCMVKADNSILTDQTKEQIARVFLALCDEPKDRGIIVAQGGGKAMIPLALEGTDVGKTKASHGLAKIAAVSNPDIAFPGERVYEVVRPLVSLLNTERDGVQNFEALLALTNLSGKSDKLRQKIVKEKALPEIENYMFENHEQIRQAATECMCNLAVNKEVKERFTAEGNDRLKLIVLLCGEDEEVKLQRAAAGTLAILTAAEKKLCHKMTEVTSQWLEILQRLCLNEDLQVQHRGVVITYNLISAEKELAKKLVESEMLEILTVIGKQADVPNKQHIINVAREALVKCLDYGFIKTVS.

TPR repeat units lie at residues 4-37 (PVQL…ITDK), 41-74 (AVLY…DASD), and 76-108 (KALF…EPKN). ARM repeat units lie at residues 167–206 (DAGA…GMCT), 209–248 (RARA…NIVD), and 746–785 (DKLR…NLAV).

It localises to the cytoplasm. The protein localises to the myofibril. It is found in the sarcomere. The protein resides in the z line. Its subcellular location is the a band. It localises to the perinuclear region. The protein localises to the cytosol. Functionally, acts as a co-chaperone for HSP90 and is required for proper folding of the myosin motor domain. Plays a role in sarcomere formation during muscle cell assembly. Is necessary for normal early lens development. This is Protein unc-45 homolog B from Xenopus laevis (African clawed frog).